A 674-amino-acid chain; its full sequence is DNA ligase (674 aa).

Residues 35-39 (DYDFD), 84-85 (SL), and glutamate 118 contribute to the NAD(+) site. Lysine 120 serves as the catalytic N6-AMP-lysine intermediate. 4 residues coordinate NAD(+): arginine 141, glutamate 184, lysine 297, and lysine 321. The Zn(2+) site is built by cysteine 415, cysteine 418, cysteine 433, and cysteine 439. The region spanning 598 to 674 (LVNTNFEGLT…ITEDEFDALL (77 aa)) is the BRCT domain.

It belongs to the NAD-dependent DNA ligase family. LigA subfamily. It depends on Mg(2+) as a cofactor. The cofactor is Mn(2+).

It catalyses the reaction NAD(+) + (deoxyribonucleotide)n-3'-hydroxyl + 5'-phospho-(deoxyribonucleotide)m = (deoxyribonucleotide)n+m + AMP + beta-nicotinamide D-nucleotide.. In terms of biological role, DNA ligase that catalyzes the formation of phosphodiester linkages between 5'-phosphoryl and 3'-hydroxyl groups in double-stranded DNA using NAD as a coenzyme and as the energy source for the reaction. It is essential for DNA replication and repair of damaged DNA. This chain is DNA ligase, found in Chlorobium phaeovibrioides (strain DSM 265 / 1930) (Prosthecochloris vibrioformis (strain DSM 265)).